The chain runs to 366 residues: Cobalt-precorrin-5B C(1)-methyltransferase (366 aa).

The protein belongs to the CbiD family.

The enzyme catalyses Co-precorrin-5B + S-adenosyl-L-methionine = Co-precorrin-6A + S-adenosyl-L-homocysteine. The protein operates within cofactor biosynthesis; adenosylcobalamin biosynthesis; cob(II)yrinate a,c-diamide from sirohydrochlorin (anaerobic route): step 6/10. Its function is as follows. Catalyzes the methylation of C-1 in cobalt-precorrin-5B to form cobalt-precorrin-6A. The polypeptide is Cobalt-precorrin-5B C(1)-methyltransferase (Methanococcus maripaludis (strain C7 / ATCC BAA-1331)).